We begin with the raw amino-acid sequence, 395 residues long: Succinyl-diaminopimelate desuccinylase (395 aa).

Position 74 (H74) interacts with Zn(2+). The active site involves D76. D107 lines the Zn(2+) pocket. The Proton acceptor role is filled by E141. Zn(2+)-binding residues include E142, E170, and H368.

Belongs to the peptidase M20A family. DapE subfamily. In terms of assembly, homodimer. The cofactor is Zn(2+). It depends on Co(2+) as a cofactor.

The enzyme catalyses N-succinyl-(2S,6S)-2,6-diaminopimelate + H2O = (2S,6S)-2,6-diaminopimelate + succinate. The protein operates within amino-acid biosynthesis; L-lysine biosynthesis via DAP pathway; LL-2,6-diaminopimelate from (S)-tetrahydrodipicolinate (succinylase route): step 3/3. In terms of biological role, catalyzes the hydrolysis of N-succinyl-L,L-diaminopimelic acid (SDAP), forming succinate and LL-2,6-diaminopimelate (DAP), an intermediate involved in the bacterial biosynthesis of lysine and meso-diaminopimelic acid, an essential component of bacterial cell walls. The chain is Succinyl-diaminopimelate desuccinylase from Brucella anthropi (strain ATCC 49188 / DSM 6882 / CCUG 24695 / JCM 21032 / LMG 3331 / NBRC 15819 / NCTC 12168 / Alc 37) (Ochrobactrum anthropi).